Consider the following 289-residue polypeptide: GTPase Era (289 aa).

Residues 2–167 form the Era-type G domain; sequence KSGFVSLIGR…LREIAKLLPE (166 aa). Positions 10 to 17 are G1; that stretch reads GRTNAGKS. Residue 10-17 coordinates GTP; that stretch reads GRTNAGKS. Residues 36–40 are G2; it reads NATRR. The segment at 57–60 is G3; that stretch reads DTPG. Residues 57 to 61 and 116 to 119 contribute to the GTP site; these read DTPGL and TKTD. The interval 116–119 is G4; that stretch reads TKTD. A G5 region spans residues 146 to 148; the sequence is VNI. The region spanning 186-274 is the KH type-2 domain; it reads YRDFILESVY…HLNLQIFVKK (89 aa).

This sequence belongs to the TRAFAC class TrmE-Era-EngA-EngB-Septin-like GTPase superfamily. Era GTPase family. In terms of assembly, monomer.

The protein localises to the cytoplasm. It localises to the cell inner membrane. An essential GTPase that binds both GDP and GTP, with rapid nucleotide exchange. Plays a role in 16S rRNA processing and 30S ribosomal subunit biogenesis and possibly also in cell cycle regulation and energy metabolism. The sequence is that of GTPase Era from Campylobacter hominis (strain ATCC BAA-381 / DSM 21671 / CCUG 45161 / LMG 19568 / NCTC 13146 / CH001A).